A 772-amino-acid polypeptide reads, in one-letter code: UDP-N-acetylmuramoyl-L-alanyl-D-glutamate--2,6-diaminopimelate ligase MurE homolog, chloroplastic (772 aa).

The N-terminal 40 residues, 1–40 (MAFTFLSPHPVFLSLTGTTSSFSYKPVLLPFSRNSRTLTV), are a transit peptide targeting the chloroplast. Disordered stretches follow at residues 42-87 (AGPA…KLEE) and 141-168 (LLKPNPPKTASLKKIGEEGNEEEGDVTD). Acidic residues-rich tracts occupy residues 54–63 (ADDDPPEAPE) and 158–168 (EGNEEEGDVTD). Position 194 is a phosphoserine (S194).

This sequence belongs to the MurCDEF family. MurE subfamily. As to quaternary structure, component of the plastid-encoded plastid RNA polymerase (PEP) complex. In terms of tissue distribution, expressed in leaves and flowers.

Its subcellular location is the plastid. The protein localises to the chloroplast. Functionally, involved in chloroplast biogenesis. Required for thylakoid membrane development. Seems to be required for plastid-encoded plastid RNA polymerase (PEP)-dependent gene expression. This Arabidopsis thaliana (Mouse-ear cress) protein is UDP-N-acetylmuramoyl-L-alanyl-D-glutamate--2,6-diaminopimelate ligase MurE homolog, chloroplastic.